The chain runs to 391 residues: AN1-type zinc finger and UBX domain-containing protein DDB_G0268260 (391 aa).

Positions 1–16 (MQQQSPPTAPQQQQQQ) are enriched in low complexity. Residues 1–20 (MQQQSPPTAPQQQQQQQRER) are disordered. AN1-type zinc fingers lie at residues 26–74 (DHIG…QREN) and 118–166 (APKS…IINS). Residues Cys-32, Cys-37, Cys-47, Cys-50, Cys-55, His-58, His-64, Cys-66, Cys-124, Cys-129, Cys-139, Cys-142, Cys-147, His-150, His-156, and Cys-158 each coordinate Zn(2+). Low complexity predominate over residues 185–236 (NINNNINNNKNNNNNNNNNNNNNNNNNNNNNNNNNNNNNNNNNNNNNSNNNN). The segment at 185–240 (NINNNINNNKNNNNNNNNNNNNNNNNNNNNNNNNNNNNNNNNNNNNNSNNNNKLIY) is disordered. The 79-residue stretch at 278-356 (SSEEIGEIGI…GLLPVSTLYM (79 aa)) folds into the UBX domain.

The protein is AN1-type zinc finger and UBX domain-containing protein DDB_G0268260 of Dictyostelium discoideum (Social amoeba).